The sequence spans 329 residues: DNA-directed RNA polymerase subunit alpha (329 aa).

The interval 1-235 (MQGSVTEFLK…EQLDAFVDLR (235 aa)) is alpha N-terminal domain (alpha-NTD). The segment at 249–329 (FDPILLRPVD…NWPPASIAED (81 aa)) is alpha C-terminal domain (alpha-CTD).

It belongs to the RNA polymerase alpha chain family. In terms of assembly, homodimer. The RNAP catalytic core consists of 2 alpha, 1 beta, 1 beta' and 1 omega subunit. When a sigma factor is associated with the core the holoenzyme is formed, which can initiate transcription.

It catalyses the reaction RNA(n) + a ribonucleoside 5'-triphosphate = RNA(n+1) + diphosphate. DNA-dependent RNA polymerase catalyzes the transcription of DNA into RNA using the four ribonucleoside triphosphates as substrates. This is DNA-directed RNA polymerase subunit alpha from Histophilus somni (strain 129Pt) (Haemophilus somnus).